Reading from the N-terminus, the 457-residue chain is Chromogranin-A (457 aa).

Residues 1-18 (MRSAAVLALLLCAGQVTA) form the signal peptide. A disulfide bond links Cys-35 and Cys-56. The O-glycosylated at one site only in cerebrospinal fluid stretch occupies residues 41 to 59 (SDTLSKPSPMPVSQECFET). The segment at 88 to 440 (KERAHQQKKH…DQELESLSAI (353 aa)) is disordered. Positions 116-144 (ELKEAVEEPSSKDVMEKREDSKEAEKSGE) are enriched in basic and acidic residues. The residue at position 142 (Ser-142) is a Phosphoserine. Acidic residues predominate over residues 171–180 (GEEEEEEEEA). Thr-181 and Thr-183 each carry an O-linked (GalNAc...) threonine glycan. Residues 181–191 (TNTHPPASLPS) form an O-glycosylated at one site only in cerebrospinal fluid region. The segment covering 182 to 191 (NTHPPASLPS) has biased composition (polar residues). Position 194 is a phosphotyrosine (Tyr-194). 2 positions are modified to phosphoserine: Ser-203 and Ser-218. Positions 229–249 (EEEEEEEEAEAGEEAVPEEEG) are enriched in acidic residues. A glycan (O-linked (GalNAc...) threonine) is linked at Thr-251. Composition is skewed to basic and acidic residues over residues 263-272 (KEIRKGESRS) and 291-303 (PEGKGEQEHSQQK). Phosphoserine is present on residues Ser-270 and Ser-300. At Gly-319 the chain carries Glycine amide. Phosphoserine occurs at positions 322, 333, and 371. Residues 330-360 (ERLSKEWEDSKRWSKMDQLAKELTAEKRLEG) show a composition bias toward basic and acidic residues. At Met-372 the chain carries Methionine sulfoxide. 4 positions are modified to phosphoserine: Ser-398, Ser-402, Ser-424, and Ser-438. Residues 414-431 (YPEEKKEEEGSANRRPED) show a composition bias toward basic and acidic residues. An O-linked (Xyl...) (chondroitin sulfate) serine glycan is attached at Ser-424. Arg-456 bears the Arginine amide mark.

This sequence belongs to the chromogranin/secretogranin protein family. In terms of assembly, self-interacts; self-assembly is promoted in vitro by chondroitin sulfate attachment which occurs at mildly acidic pH conditions. Interacts with SCG3. Interacts with ITPR1 in the secretory granules. In terms of processing, sulfated on tyrosine residues and/or contains sulfated glycans. O-glycosylated with core 1 or possibly core 8 glycans. Contains chondroitin sulfate (CS); CS attachment is pH-dependent, being observed at mildly acidic conditions of pH 5 but not at neutral pH, and promotes self-assembly in vitro. Post-translationally, proteolytic processing gives rise to an additional longer form of catestatin (residues 358-390) which displays a less potent catecholamine release-inhibitory activity. Plasmin-mediated proteolytic processing can give rise to additional shorter and longer forms of catestatin peptides. Detected in cerebrospinal fluid (at protein level). Detected in urine (at protein level). As to expression, found in the brain.

The protein localises to the secreted. It localises to the cytoplasmic vesicle. It is found in the secretory vesicle. Its subcellular location is the neuronal dense core vesicle. Functionally, strongly inhibits glucose induced insulin release from the pancreas. Inhibits catecholamine release from chromaffin cells and noradrenergic neurons by acting as a non-competitive nicotinic cholinergic antagonist. Displays antibacterial activity against Gram-positive bacteria S.aureus and M.luteus, and Gram-negative bacteria E.coli and P.aeruginosa. Can induce mast cell migration, degranulation and production of cytokines and chemokines. Acts as a potent scavenger of free radicals in vitro. May play a role in the regulation of cardiac function and blood pressure. Its function is as follows. Regulates granule biogenesis in endocrine cells by up-regulating the transcription of protease nexin 1 (SERPINE2) via a cAMP-PKA-SP1 pathway. This leads to inhibition of granule protein degradation in the Golgi complex which in turn promotes granule formation. In Homo sapiens (Human), this protein is Chromogranin-A (CHGA).